We begin with the raw amino-acid sequence, 780 residues long: ATP-dependent 6-phosphofructokinase, muscle type (780 aa).

The residue at position 2 (threonine 2) is an N-acetylthreonine. The interval 2–390 is N-terminal catalytic PFK domain 1; sequence THEEHHATKT…NWEVYKLLAH (389 aa). Residues glycine 25, 88 to 89, and 118 to 121 each bind ATP; these read RC and GDGS. Aspartate 119 serves as a coordination point for Mg(2+). Phosphoserine is present on serine 133. Substrate is bound by residues 164 to 166, arginine 201, 208 to 210, glutamate 264, arginine 292, and 298 to 301; these read SID, MGR, and HVQR. Aspartate 166 functions as the Proton acceptor in the catalytic mechanism. A Phosphoserine modification is found at serine 377. Residues 391-401 form an interdomain linker region; that stretch reads VRPPVSKSGSH. The C-terminal regulatory PFK domain 2 stretch occupies residues 402 to 780; sequence TVAVMNVGAP…TRKRSGEAAV (379 aa). Beta-D-fructose 2,6-bisphosphate-binding positions include arginine 471 and 528 to 532; that span reads TVSNN. Residue serine 530 is glycosylated (O-linked (GlcNAc) serine). Lysine 557 carries the post-translational modification N6-(2-hydroxyisobutyryl)lysine. Beta-D-fructose 2,6-bisphosphate is bound by residues arginine 566, 573–575, glutamate 629, arginine 655, and 661–664; these read MGG and HMQQ. Serine 667 bears the Phosphoserine mark. Arginine 735 serves as a coordination point for beta-D-fructose 2,6-bisphosphate. Serine 775 bears the Phosphoserine mark.

The protein belongs to the phosphofructokinase type A (PFKA) family. ATP-dependent PFK group I subfamily. Eukaryotic two domain clade 'E' sub-subfamily. As to quaternary structure, homo- and heterotetramers. Phosphofructokinase (PFK) enzyme functions as a tetramer composed of different combinations of 3 types of subunits, called PFKM (M), PFKL (L) and PFKP (P). The composition of the PFK tetramer differs according to the tissue type it is present in. The kinetic and regulatory properties of the tetrameric enzyme are dependent on the subunit composition, hence can vary across tissues. Interacts (via C-terminus) with HK1 (via N-terminal spermatogenic cell-specific region). Mg(2+) is required as a cofactor. In terms of processing, glcNAcylation decreases enzyme activity.

Its subcellular location is the cytoplasm. It carries out the reaction beta-D-fructose 6-phosphate + ATP = beta-D-fructose 1,6-bisphosphate + ADP + H(+). It functions in the pathway carbohydrate degradation; glycolysis; D-glyceraldehyde 3-phosphate and glycerone phosphate from D-glucose: step 3/4. With respect to regulation, allosterically activated by ADP, AMP, or fructose 2,6-bisphosphate, and allosterically inhibited by ATP or citrate. Functionally, catalyzes the phosphorylation of D-fructose 6-phosphate to fructose 1,6-bisphosphate by ATP, the first committing step of glycolysis. In Pongo abelii (Sumatran orangutan), this protein is ATP-dependent 6-phosphofructokinase, muscle type (PFKM).